We begin with the raw amino-acid sequence, 393 residues long: MAAPVSAIGFEGYEKRLEITFSEASIFADPHGRGLRALSRAQIDSVLDLARCTIVSELSNKDFDSYVLSESSLFIYSQKIVIKTCGTTMLLLTIPRILELAEELCMPLAAVKYSRGMFIFPGAQPAPHRSFSEEVDVLNRYFGHLNSGGNAYVIGDPAKPGQKWHIYYATEQPEQPMVTLEMCMTGLDKTKASVFFKTHADGHVSCAKEMTKLSGISDIIPEMEVCDFDFEPCGYSMNAINGSAFSTIHVTPEDGFSYASYEVQGMDASALAYGDIVKRVLRCFGPSEFSVAVTIFGGRGHAATWGKKLDAEAYDCNNVVEQELPCGGVLIYQSFAANEELAVSAGSPRSVFHCFENVESGHPLVKEGKLANLLAWRAEEESLEEGTGALLCE.

Active-site residues include glutamate 11 and glutamate 14. Catalysis depends on serine 71, which acts as the Schiff-base intermediate with substrate; via pyruvic acid. Residue serine 71 is modified to Pyruvic acid (Ser); by autocatalysis. The active-site Proton donor; for catalytic activity is the cysteine 85. Catalysis depends on proton acceptor; for processing activity residues serine 236 and histidine 249.

Belongs to the eukaryotic AdoMetDC family. Pyruvate is required as a cofactor. In terms of processing, is synthesized initially as an inactive proenzyme. Formation of the active enzyme involves a self-maturation process in which the active site pyruvoyl group is generated from an internal serine residue via an autocatalytic post-translational modification. Two non-identical subunits are generated from the proenzyme in this reaction, and the pyruvate is formed at the N-terminus of the alpha chain, which is derived from the carboxyl end of the proenzyme. The post-translation cleavage follows an unusual pathway, termed non-hydrolytic serinolysis, in which the side chain hydroxyl group of the serine supplies its oxygen atom to form the C-terminus of the beta chain, while the remainder of the serine residue undergoes an oxidative deamination to produce ammonia and the pyruvoyl group blocking the N-terminus of the alpha chain.

The catalysed reaction is S-adenosyl-L-methionine + H(+) = S-adenosyl 3-(methylsulfanyl)propylamine + CO2. Its pathway is amine and polyamine biosynthesis; S-adenosylmethioninamine biosynthesis; S-adenosylmethioninamine from S-adenosyl-L-methionine: step 1/1. The polypeptide is S-adenosylmethionine decarboxylase proenzyme (SAMDC) (Hordeum chilense (Barley)).